The chain runs to 237 residues: NAD(P)H-quinone oxidoreductase subunit K (237 aa).

4 residues coordinate [4Fe-4S] cluster: C52, C53, C117, and C148.

The protein belongs to the complex I 20 kDa subunit family. In terms of assembly, NDH-1 can be composed of about 15 different subunits; different subcomplexes with different compositions have been identified which probably have different functions. Requires [4Fe-4S] cluster as cofactor.

Its subcellular location is the cellular thylakoid membrane. The enzyme catalyses a plastoquinone + NADH + (n+1) H(+)(in) = a plastoquinol + NAD(+) + n H(+)(out). It catalyses the reaction a plastoquinone + NADPH + (n+1) H(+)(in) = a plastoquinol + NADP(+) + n H(+)(out). In terms of biological role, NDH-1 shuttles electrons from an unknown electron donor, via FMN and iron-sulfur (Fe-S) centers, to quinones in the respiratory and/or the photosynthetic chain. The immediate electron acceptor for the enzyme in this species is believed to be plastoquinone. Couples the redox reaction to proton translocation, and thus conserves the redox energy in a proton gradient. Cyanobacterial NDH-1 also plays a role in inorganic carbon-concentration. This is NAD(P)H-quinone oxidoreductase subunit K from Thermosynechococcus vestitus (strain NIES-2133 / IAM M-273 / BP-1).